The following is a 317-amino-acid chain: MIDIVRWRYAFYLLSLLIIIPGTIYLLLFGLRLGIDFEGGTFWQIQFEKPVRIEDVRSALAQAGYNEAFVQSFGQQSNTAQGTVTRGVSMRLPEIKENSPEKAKLEQILKSRFGNYEELVFTSVGPAVGREIRNRSIVAIALASLGILGYIAFAFRKVSHPFRYGICAIIAMLHDVLVVVGIFAILGKHFGVEIDALFVTALLTVIGFSVHDTIVVFDRIRENQLRRYGESFEQIVNISLLQTLVRSVNTSMTVIFTLLALYFFGGTTIKHFVLALLIGIVSGTYSSIFNASLLLVSWENKDFLRIFRRTEPEAAAT.

6 helical membrane passes run 11 to 31 (FYLL…LFGL), 135 to 155 (RSIV…AFAF), 166 to 186 (ICAI…FAIL), 197 to 217 (LFVT…IVVF), 244 to 266 (LVRS…FFGG), and 276 to 298 (LLIG…LVSW).

It belongs to the SecD/SecF family. SecF subfamily. In terms of assembly, forms a complex with SecD. Part of the essential Sec protein translocation apparatus which comprises SecA, SecYEG and auxiliary proteins SecDF. Other proteins may also be involved.

It localises to the cell membrane. Functionally, part of the Sec protein translocase complex. Interacts with the SecYEG preprotein conducting channel. SecDF uses the proton motive force (PMF) to complete protein translocation after the ATP-dependent function of SecA. The polypeptide is Protein translocase subunit SecF (Thermobaculum terrenum (strain ATCC BAA-798 / CCMEE 7001 / YNP1)).